The sequence spans 243 residues: UPF0246 protein SpyM3_1790 (243 aa).

Belongs to the UPF0246 family.

The chain is UPF0246 protein SpyM3_1790 from Streptococcus pyogenes serotype M3 (strain ATCC BAA-595 / MGAS315).